A 213-amino-acid chain; its full sequence is Ribosomal RNA large subunit methyltransferase E (213 aa).

S-adenosyl-L-methionine contacts are provided by Gly60, Trp62, Asp80, Asp96, and Asp121. The active-site Proton acceptor is the Lys161.

Belongs to the class I-like SAM-binding methyltransferase superfamily. RNA methyltransferase RlmE family.

It is found in the cytoplasm. The catalysed reaction is uridine(2552) in 23S rRNA + S-adenosyl-L-methionine = 2'-O-methyluridine(2552) in 23S rRNA + S-adenosyl-L-homocysteine + H(+). Specifically methylates the uridine in position 2552 of 23S rRNA at the 2'-O position of the ribose in the fully assembled 50S ribosomal subunit. The polypeptide is Ribosomal RNA large subunit methyltransferase E (Xylella fastidiosa (strain 9a5c)).